A 640-amino-acid chain; its full sequence is Threonine--tRNA ligase (640 aa).

In terms of domain architecture, TGS spans 1–61; sequence MPIITLPDGS…TNDAEIQIIT (61 aa). A catalytic region spans residues 242–533; that stretch reads DHRKLGKKLS…LIENYSGNLP (292 aa). Residues Cys-333, His-384, and His-510 each coordinate Zn(2+).

Belongs to the class-II aminoacyl-tRNA synthetase family. As to quaternary structure, homodimer. Zn(2+) serves as cofactor.

It localises to the cytoplasm. It catalyses the reaction tRNA(Thr) + L-threonine + ATP = L-threonyl-tRNA(Thr) + AMP + diphosphate + H(+). Its function is as follows. Catalyzes the attachment of threonine to tRNA(Thr) in a two-step reaction: L-threonine is first activated by ATP to form Thr-AMP and then transferred to the acceptor end of tRNA(Thr). Also edits incorrectly charged L-seryl-tRNA(Thr). The sequence is that of Threonine--tRNA ligase from Prochlorococcus marinus (strain NATL1A).